Consider the following 123-residue polypeptide: MPTISQLIRKPRHEKAYREKARHLEACPQKRGVCTRVYTTTPKKPNSALRKVAKVRLTNGFEVIGYIPGEGHNLQEHSVVMIRGGRVKDLPGVRYHILRGVLDTQGVKNRKQRRSKYGAKRPK.

Aspartate 89 carries the 3-methylthioaspartic acid modification.

The protein belongs to the universal ribosomal protein uS12 family. In terms of assembly, part of the 30S ribosomal subunit. Contacts proteins S8 and S17. May interact with IF1 in the 30S initiation complex.

Its function is as follows. With S4 and S5 plays an important role in translational accuracy. Interacts with and stabilizes bases of the 16S rRNA that are involved in tRNA selection in the A site and with the mRNA backbone. Located at the interface of the 30S and 50S subunits, it traverses the body of the 30S subunit contacting proteins on the other side and probably holding the rRNA structure together. The combined cluster of proteins S8, S12 and S17 appears to hold together the shoulder and platform of the 30S subunit. The polypeptide is Small ribosomal subunit protein uS12 (Beijerinckia indica subsp. indica (strain ATCC 9039 / DSM 1715 / NCIMB 8712)).